Here is a 208-residue protein sequence, read N- to C-terminus: Small ribosomal subunit protein uS4 (208 aa).

A disordered region spans residues 24–52 (GVKPFDVKTKKANKAPGQHGQARGGKQSE). Residues 98–160 (SRLDNVVYRM…AKQQLRIKNA (63 aa)) enclose the S4 RNA-binding domain.

It belongs to the universal ribosomal protein uS4 family. Part of the 30S ribosomal subunit. Contacts protein S5. The interaction surface between S4 and S5 is involved in control of translational fidelity.

Its function is as follows. One of the primary rRNA binding proteins, it binds directly to 16S rRNA where it nucleates assembly of the body of the 30S subunit. Functionally, with S5 and S12 plays an important role in translational accuracy. The protein is Small ribosomal subunit protein uS4 of Acinetobacter baumannii (strain ACICU).